The primary structure comprises 823 residues: Pentatricopeptide repeat-containing protein At4g33990 (823 aa).

PPR repeat units lie at residues N85 to R115, D116 to P151, D152 to W183, D184 to R214, D215 to T249, S252 to S280, E281 to R311, D312 to P346, D347 to L381, D383 to T413, D414 to A448, N450 to L484, D485 to V515, N516 to P550, D551 to D581, and S587 to Q617. The type E motif stretch occupies residues I622–D697. Residues N698–K728 form a type E(+) motif region. Residues M729 to W823 form a type DYW motif region.

Belongs to the PPR family. PCMP-H subfamily.

The protein is Pentatricopeptide repeat-containing protein At4g33990 (EMB2758) of Arabidopsis thaliana (Mouse-ear cress).